Consider the following 567-residue polypeptide: Methionine--tRNA ligase (567 aa).

A 'HIGH' region motif is present at residues 11–21; that stretch reads PYVQTVPHLGN. Residues C143, C146, C156, and C159 each contribute to the Zn(2+) site. The 'KMSKS' region motif lies at 331–335; sequence KFSKS. K334 provides a ligand contact to ATP.

It belongs to the class-I aminoacyl-tRNA synthetase family. MetG type 1 subfamily. It depends on Zn(2+) as a cofactor.

The protein resides in the cytoplasm. The enzyme catalyses tRNA(Met) + L-methionine + ATP = L-methionyl-tRNA(Met) + AMP + diphosphate. Is required not only for elongation of protein synthesis but also for the initiation of all mRNA translation through initiator tRNA(fMet) aminoacylation. The sequence is that of Methionine--tRNA ligase from Pyrobaculum islandicum (strain DSM 4184 / JCM 9189 / GEO3).